The following is a 140-amino-acid chain: 3-hydroxyacyl-[acyl-carrier-protein] dehydratase FabZ (140 aa).

The active site involves histidine 48.

Belongs to the thioester dehydratase family. FabZ subfamily.

It localises to the cytoplasm. The enzyme catalyses a (3R)-hydroxyacyl-[ACP] = a (2E)-enoyl-[ACP] + H2O. In terms of biological role, involved in unsaturated fatty acids biosynthesis. Catalyzes the dehydration of short chain beta-hydroxyacyl-ACPs and long chain saturated and unsaturated beta-hydroxyacyl-ACPs. The protein is 3-hydroxyacyl-[acyl-carrier-protein] dehydratase FabZ of Ligilactobacillus salivarius (strain UCC118) (Lactobacillus salivarius).